Here is a 179-residue protein sequence, read N- to C-terminus: 3-hydroxyanthranilate 3,4-dioxygenase (179 aa).

Position 47 (Arg-47) interacts with O2. Positions 51, 57, and 96 each coordinate Fe cation. Glu-57 contacts substrate. Residues Arg-100 and Glu-110 each coordinate substrate. Residues Cys-125, Cys-128, Cys-162, and Cys-165 each contribute to the Fe cation site.

Belongs to the 3-HAO family. The cofactor is Fe(2+).

It carries out the reaction 3-hydroxyanthranilate + O2 = (2Z,4Z)-2-amino-3-carboxymuconate 6-semialdehyde. It functions in the pathway cofactor biosynthesis; NAD(+) biosynthesis; quinolinate from L-kynurenine: step 3/3. Its function is as follows. Catalyzes the oxidative ring opening of 3-hydroxyanthranilate to 2-amino-3-carboxymuconate semialdehyde, which spontaneously cyclizes to quinolinate. The protein is 3-hydroxyanthranilate 3,4-dioxygenase of Bacillus thuringiensis (strain Al Hakam).